The chain runs to 491 residues: Ketol-acid reductoisomerase (NADP(+)) (491 aa).

The KARI N-terminal Rossmann domain occupies 15–208; sequence AQLGKCRFMG…GGHRAGVLES (194 aa). NADP(+) is bound by residues 45-48, R68, R76, S78, and 108-110; these read CGAQ and DKQ. Residue H132 is part of the active site. G158 is an NADP(+) binding site. 2 KARI C-terminal knotted domains span residues 209–344 and 345–484; these read SFVA…TAPQ and FEGK…MTDM. The Mg(2+) site is built by D217, E221, E389, and E393. Substrate is bound at residue S414.

This sequence belongs to the ketol-acid reductoisomerase family. Mg(2+) is required as a cofactor.

The enzyme catalyses (2R)-2,3-dihydroxy-3-methylbutanoate + NADP(+) = (2S)-2-acetolactate + NADPH + H(+). It catalyses the reaction (2R,3R)-2,3-dihydroxy-3-methylpentanoate + NADP(+) = (S)-2-ethyl-2-hydroxy-3-oxobutanoate + NADPH + H(+). It participates in amino-acid biosynthesis; L-isoleucine biosynthesis; L-isoleucine from 2-oxobutanoate: step 2/4. It functions in the pathway amino-acid biosynthesis; L-valine biosynthesis; L-valine from pyruvate: step 2/4. Functionally, involved in the biosynthesis of branched-chain amino acids (BCAA). Catalyzes an alkyl-migration followed by a ketol-acid reduction of (S)-2-acetolactate (S2AL) to yield (R)-2,3-dihydroxy-isovalerate. In the isomerase reaction, S2AL is rearranged via a Mg-dependent methyl migration to produce 3-hydroxy-3-methyl-2-ketobutyrate (HMKB). In the reductase reaction, this 2-ketoacid undergoes a metal-dependent reduction by NADPH to yield (R)-2,3-dihydroxy-isovalerate. The protein is Ketol-acid reductoisomerase (NADP(+)) of Salmonella heidelberg (strain SL476).